The primary structure comprises 129 residues: ATP synthase epsilon chain (129 aa).

It belongs to the ATPase epsilon chain family. As to quaternary structure, F-type ATPases have 2 components, CF(1) - the catalytic core - and CF(0) - the membrane proton channel. CF(1) has five subunits: alpha(3), beta(3), gamma(1), delta(1), epsilon(1). CF(0) has three main subunits: a, b and c.

The protein localises to the cell inner membrane. Its function is as follows. Produces ATP from ADP in the presence of a proton gradient across the membrane. In Campylobacter concisus (strain 13826), this protein is ATP synthase epsilon chain.